The primary structure comprises 279 residues: NAD kinase (279 aa).

Asp57 functions as the Proton acceptor in the catalytic mechanism. NAD(+) contacts are provided by residues 57–58 (DG), 133–134 (NE), Arg159, Asp161, 172–177 (TAYNKS), and Ala196.

Belongs to the NAD kinase family. The cofactor is a divalent metal cation.

Its subcellular location is the cytoplasm. The enzyme catalyses NAD(+) + ATP = ADP + NADP(+) + H(+). Its function is as follows. Involved in the regulation of the intracellular balance of NAD and NADP, and is a key enzyme in the biosynthesis of NADP. Catalyzes specifically the phosphorylation on 2'-hydroxyl of the adenosine moiety of NAD to yield NADP. The sequence is that of NAD kinase from Streptococcus thermophilus (strain CNRZ 1066).